The following is a 719-amino-acid chain: DNA replication licensing factor MCM7 (719 aa).

Ala2 is modified (N-acetylalanine). Residues Lys15 and Lys28 each participate in a glycyl lysine isopeptide (Lys-Gly) (interchain with G-Cter in SUMO2) cross-link. A phosphoserine mark is found at Ser121 and Ser314. The region spanning 332 to 538 is the MCM domain; it reads FYEKLAASIA…NDLRLAQHIT (207 aa). Tyr345 contributes to the ATP binding site. The residue at position 365 (Ser365) is a Phosphoserine. ATP is bound by residues Gly384, Ala386, Lys387, Ser388, and Asn489. Ser500 bears the Phosphoserine mark. Positions 513–516 match the Arginine finger motif; sequence SRFD. Arg514 lines the ATP pocket. The interaction with RAD17 stretch occupies residues 521 to 564; that stretch reads IQDRPDRDNDLRLAQHITYVHQHSRQPPSQFEPLDMKLMRRYIA. The interval 577–719 is interaction with ATRIP; it reads LADYITAAYV…NASRTRITFV (143 aa). Arg604 provides a ligand contact to ATP. Ser678 bears the Phosphoserine mark.

It belongs to the MCM family. In terms of assembly, component of the MCM2-7 complex. The complex forms a toroidal hexameric ring with the proposed subunit order MCM2-MCM6-MCM4-MCM7-MCM3-MCM5. Component of the CMG helicase complex, a hexameric ring of related MCM2-7 subunits stabilized by CDC45 and the tetrameric GINS complex. Interacts with the ATR-ATRIP complex and with RAD17. Interacts with TIPIN. Interacts with MCMBP. Interacts with ANKRD17. Component of the replisome complex composed of at least DONSON, MCM2, MCM7, PCNA and TICRR. O-glycosylated (O-GlcNAcylated), in a cell cycle-dependent manner. In terms of processing, ubiquitinated by ECS(LRR1) E3 ubiquitin-protein ligase complex when forks converge following formation of DNA interstrand cross-links. During mitosis, ubiquitinated by TRAIP when forks converge following formation of DNA interstrand cross-links. Short ubiquitin chains on MCM7 promote recruitment of DNA glycosylase NEIL3. If the interstrand cross-link cannot be cleaved by NEIL3, the ubiquitin chains continue to grow on MCM7, promoting the unloading of the CMG helicase complex by the VCP/p97 ATPase.

The protein resides in the nucleus. The protein localises to the chromosome. The catalysed reaction is ATP + H2O = ADP + phosphate + H(+). Functionally, acts as a component of the MCM2-7 complex (MCM complex) which is the replicative helicase essential for 'once per cell cycle' DNA replication initiation and elongation in eukaryotic cells. Core component of CDC45-MCM-GINS (CMG) helicase, the molecular machine that unwinds template DNA during replication, and around which the replisome is built. The active ATPase sites in the MCM2-7 ring are formed through the interaction surfaces of two neighboring subunits such that a critical structure of a conserved arginine finger motif is provided in trans relative to the ATP-binding site of the Walker A box of the adjacent subunit. The six ATPase active sites, however, are likely to contribute differentially to the complex helicase activity. Required for S-phase checkpoint activation upon UV-induced damage. This Homo sapiens (Human) protein is DNA replication licensing factor MCM7.